Consider the following 942-residue polypeptide: MORC family CW-type zinc finger protein 3 (942 aa).

Glycyl lysine isopeptide (Lys-Gly) (interchain with G-Cter in SUMO2) cross-links involve residues K191, K205, K280, and K293. The nuclear matrix binding stretch occupies residues 326 to 353; sequence AYEKVGCQLKANNMGVGVVGIIECNFLK. The CW-type zinc-finger motif lies at 404–454; the sequence is KRPDQTWVQCDACLKWRKLPDGIDQLPEKWYCSNNPDPQFRNCEVPEEPED. Residues C413, C416, C435, and C446 each contribute to the Zn(2+) site. An RNA binding region spans residues 503 to 594; the sequence is SFSPVKESVP…ENSTPKPAVD (92 aa). S517 and S543 each carry phosphoserine. Residue K558 forms a Glycyl lysine isopeptide (Lys-Gly) (interchain with G-Cter in SUMO2) linkage. S563 carries the post-translational modification Phosphoserine. K604 participates in a covalent cross-link: Glycyl lysine isopeptide (Lys-Gly) (interchain with G-Cter in SUMO1); alternate. K604 participates in a covalent cross-link: Glycyl lysine isopeptide (Lys-Gly) (interchain with G-Cter in SUMO2); alternate. The disordered stretch occupies residues 623–654; sequence PKPCVQASSTSTSTSRSDPGITVSTQTDAPGL. The span at 630–639 shows a compositional bias: low complexity; that stretch reads SSTSTSTSRS. Glycyl lysine isopeptide (Lys-Gly) (interchain with G-Cter in SUMO1); alternate cross-links involve residues K657, K658, and K743. Residues K657, K658, and K743 each participate in a glycyl lysine isopeptide (Lys-Gly) (interchain with G-Cter in SUMO2); alternate cross-link. Residues 696–874 adopt a coiled-coil conformation; the sequence is SHQLQELRSE…KSTGQQAAAD (179 aa). Phosphoserine is present on S768. A Glycyl lysine isopeptide (Lys-Gly) (interchain with G-Cter in SUMO1); alternate cross-link involves residue K797. K797 is covalently cross-linked (Glycyl lysine isopeptide (Lys-Gly) (interchain with G-Cter in SUMO2); alternate).

In terms of assembly, homodimer. The sumoylated form interacts with PML (via SUMO-interacting motif). Interacts with TP53. Post-translationally, sumoylation is involved in interaction with PML and localization to PML nuclear bodies.

The protein resides in the nucleus. The protein localises to the nucleoplasm. It is found in the nucleus matrix. Its subcellular location is the PML body. It localises to the chromosome. Its activity is regulated as follows. Dimerization of the ATPase domain is strictly required for the catalytic activity and binding to double-stranded DNA. Disrupting the interface between ATPase and the CW domains releases autoinhibition since the CW domain sterically impedes binding of the ATPase domain to DNA. Nuclear matrix protein which forms MORC3-NBs (nuclear bodies) via an ATP-dependent mechanism and plays a role in innate immunity by restricting different viruses through modulation of the IFN response. Mechanistically, possesses a primary antiviral function through a MORC3-regulated element that activates IFNB1, and this function is guarded by a secondary IFN-repressing function. Sumoylated MORC3-NBs associates with PML-NBs and recruits TP53 and SP100, thus regulating TP53 activity. Binds RNA in vitro. Histone methylation reader which binds to non-methylated (H3K4me0), monomethylated (H3K4me1), dimethylated (H3K4me2) and trimethylated (H3K4me3) 'Lys-4' on histone H3. The order of binding preference is H3K4me3 &gt; H3K4me2 &gt; H3K4me1 &gt; H3K4me0. The chain is MORC family CW-type zinc finger protein 3 from Mus musculus (Mouse).